The chain runs to 137 residues: Nucleoside diphosphate kinase (137 aa).

ATP is bound by residues Lys9, Phe57, Arg85, Thr91, Arg102, and Asn112. His115 acts as the Pros-phosphohistidine intermediate in catalysis.

The protein belongs to the NDK family. Homotetramer. It depends on Mg(2+) as a cofactor.

The protein localises to the cytoplasm. It catalyses the reaction a 2'-deoxyribonucleoside 5'-diphosphate + ATP = a 2'-deoxyribonucleoside 5'-triphosphate + ADP. The catalysed reaction is a ribonucleoside 5'-diphosphate + ATP = a ribonucleoside 5'-triphosphate + ADP. Its function is as follows. Major role in the synthesis of nucleoside triphosphates other than ATP. The ATP gamma phosphate is transferred to the NDP beta phosphate via a ping-pong mechanism, using a phosphorylated active-site intermediate. This chain is Nucleoside diphosphate kinase, found in Campylobacter lari (strain RM2100 / D67 / ATCC BAA-1060).